We begin with the raw amino-acid sequence, 226 residues long: Pyridoxal 5'-phosphate synthase subunit Pdx2 (226 aa).

52–54 lines the L-glutamine pocket; that stretch reads GES. Catalysis depends on C87, which acts as the Nucleophile. L-glutamine-binding positions include R124 and 156–157; that span reads IR. Catalysis depends on charge relay system residues H199 and E201.

This sequence belongs to the glutaminase PdxT/SNO family. In terms of assembly, in the presence of PdxS, forms a dodecamer of heterodimers. Only shows activity in the heterodimer.

The catalysed reaction is aldehydo-D-ribose 5-phosphate + D-glyceraldehyde 3-phosphate + L-glutamine = pyridoxal 5'-phosphate + L-glutamate + phosphate + 3 H2O + H(+). It catalyses the reaction L-glutamine + H2O = L-glutamate + NH4(+). It participates in cofactor biosynthesis; pyridoxal 5'-phosphate biosynthesis. Catalyzes the hydrolysis of glutamine to glutamate and ammonia as part of the biosynthesis of pyridoxal 5'-phosphate. The resulting ammonia molecule is channeled to the active site of PdxS. The chain is Pyridoxal 5'-phosphate synthase subunit Pdx2 from Plasmodium berghei.